Reading from the N-terminus, the 329-residue chain is E3 ubiquitin-protein ligase SINA-like 4 (329 aa).

The span at 1–12 (MTKLGRRNDGGG) shows a compositional bias: basic and acidic residues. The tract at residues 1 to 58 (MTKLGRRNDGGGKSHRSSTKRQRRTSVSVDDPSPGEEEEKTLVVLTDDSDSEEDDKPL) is disordered. Basic residues predominate over residues 13–24 (KSHRSSTKRQRR). The segment at 86–122 (CPNCFDPLKKPIFQCNNGHLACFLCCIKLKKRCSFCK) adopts an RING-type; degenerate zinc-finger fold. Positions 136–325 (VIKAGLVSCS…MEISIGDKND (190 aa)) are SBD. Residues 139–198 (AGLVSCSNAIYGCKQSTTYGNQLQSHEKVCVFAPCSCPIKDCNYIGFYKDLINHFRATHK) form an SIAH-type zinc finger. 8 residues coordinate Zn(2+): C144, C151, H164, C168, C175, C180, H192, and H197.

Belongs to the SINA (Seven in absentia) family.

The catalysed reaction is S-ubiquitinyl-[E2 ubiquitin-conjugating enzyme]-L-cysteine + [acceptor protein]-L-lysine = [E2 ubiquitin-conjugating enzyme]-L-cysteine + N(6)-ubiquitinyl-[acceptor protein]-L-lysine.. Its pathway is protein modification; protein ubiquitination. E3 ubiquitin-protein ligase that mediates ubiquitination and subsequent proteasomal degradation of target proteins. E3 ubiquitin ligases accept ubiquitin from an E2 ubiquitin-conjugating enzyme in the form of a thioester and then directly transfers the ubiquitin to targeted substrates. It probably triggers the ubiquitin-mediated degradation of different substrates. This chain is E3 ubiquitin-protein ligase SINA-like 4, found in Arabidopsis thaliana (Mouse-ear cress).